A 573-amino-acid polypeptide reads, in one-letter code: 3-oxosteroid 1-dehydrogenase (573 aa).

7-36 lines the FAD pocket; it reads DLIVVGSGAGACWAPIRAQEQGLKTLVVEK.

It belongs to the FAD-dependent oxidoreductase 2 family. 3-oxosteroid dehydrogenase subfamily. FAD is required as a cofactor.

It localises to the cell inner membrane. The enzyme catalyses a 3-oxosteroid + A = a 3-oxo-Delta(1)-steroid + AH2. It participates in lipid metabolism; steroid degradation. In terms of biological role, dehydrogenates steroids by introducing a double bond in steroid ring A. This chain is 3-oxosteroid 1-dehydrogenase, found in Comamonas testosteroni (Pseudomonas testosteroni).